The primary structure comprises 704 residues: Protein arginine N-methyltransferase 7 (704 aa).

SAM-dependent MTase PRMT-type domains are found at residues 14 to 356 (ENTW…YSLW) and 366 to 704 (SQPA…EKSE).

It belongs to the class I-like SAM-binding methyltransferase superfamily. Protein arginine N-methyltransferase family. PRMT7 subfamily.

In terms of biological role, essential arginine methyltransferase that can both catalyze the formation of omega-N monomethylarginine (MMA) and symmetrical dimethylarginine (sDMA). Specifically mediates the symmetrical dimethylation of arginine residues in the small nuclear ribonucleoproteins SmD1 and SmD3. The protein is Protein arginine N-methyltransferase 7 (Art7) of Drosophila grimshawi (Hawaiian fruit fly).